We begin with the raw amino-acid sequence, 130 residues long: Small ribosomal subunit protein uS8 (130 aa).

It belongs to the universal ribosomal protein uS8 family. In terms of assembly, part of the 30S ribosomal subunit. Contacts proteins S5 and S12.

Functionally, one of the primary rRNA binding proteins, it binds directly to 16S rRNA central domain where it helps coordinate assembly of the platform of the 30S subunit. The polypeptide is Small ribosomal subunit protein uS8 (Cronobacter sakazakii (strain ATCC BAA-894) (Enterobacter sakazakii)).